The following is a 130-amino-acid chain: RutC family protein slr0709 (130 aa).

The protein belongs to the RutC family.

This is RutC family protein slr0709 from Synechocystis sp. (strain ATCC 27184 / PCC 6803 / Kazusa).